The sequence spans 378 residues: 3-dehydroquinate synthase (378 aa).

Residues 115 to 119, 139 to 140, Lys-152, and Lys-161 each bind NAD(+); these read GVVGD and TS. Zn(2+)-binding residues include Glu-194, His-256, and His-275.

The protein belongs to the sugar phosphate cyclases superfamily. Dehydroquinate synthase family. Co(2+) serves as cofactor. It depends on Zn(2+) as a cofactor. The cofactor is NAD(+).

The protein localises to the cytoplasm. It catalyses the reaction 7-phospho-2-dehydro-3-deoxy-D-arabino-heptonate = 3-dehydroquinate + phosphate. It functions in the pathway metabolic intermediate biosynthesis; chorismate biosynthesis; chorismate from D-erythrose 4-phosphate and phosphoenolpyruvate: step 2/7. Its function is as follows. Catalyzes the conversion of 3-deoxy-D-arabino-heptulosonate 7-phosphate (DAHP) to dehydroquinate (DHQ). The protein is 3-dehydroquinate synthase of Brucella abortus biovar 1 (strain 9-941).